The following is a 248-amino-acid chain: Cytochrome c oxidase subunit 2 (248 aa).

At 1–39 the chain is on the mitochondrial intermembrane side; sequence MMKELLMNNMLNDVPTPWAMYFQDSATPNMEGIMELHNN. The helical transmembrane segment at 40–56 threads the bilayer; that stretch reads VVFYLIIMLCFVTYMLY. Residues 57 to 87 are Mitochondrial matrix-facing; that stretch reads NISTVYNKSAVAYKYMNHGQFIEMVWTTFPA. Residues 88 to 104 traverse the membrane as a helical segment; that stretch reads VMLLIMAFPSFMLLYIC. Residues 105-248 are Mitochondrial intermembrane-facing; it reads DEVMAPAMTI…ADFLTWIDEQ (144 aa). Residues histidine 183, cysteine 218, glutamate 220, cysteine 222, histidine 226, and methionine 229 each coordinate Cu cation. Mg(2+) is bound at residue glutamate 220.

It belongs to the cytochrome c oxidase subunit 2 family. As to quaternary structure, component of the cytochrome c oxidase (complex IV, CIV), a multisubunit enzyme composed of a catalytic core of 3 subunits and several supernumerary subunits. The complex exists as a monomer or a dimer and forms supercomplexes (SCs) in the inner mitochondrial membrane with ubiquinol-cytochrome c oxidoreductase (cytochrome b-c1 complex, complex III, CIII). It depends on Cu cation as a cofactor.

It localises to the mitochondrion inner membrane. The catalysed reaction is 4 Fe(II)-[cytochrome c] + O2 + 8 H(+)(in) = 4 Fe(III)-[cytochrome c] + 2 H2O + 4 H(+)(out). Functionally, component of the cytochrome c oxidase, the last enzyme in the mitochondrial electron transport chain which drives oxidative phosphorylation. The respiratory chain contains 3 multisubunit complexes succinate dehydrogenase (complex II, CII), ubiquinol-cytochrome c oxidoreductase (cytochrome b-c1 complex, complex III, CIII) and cytochrome c oxidase (complex IV, CIV), that cooperate to transfer electrons derived from NADH and succinate to molecular oxygen, creating an electrochemical gradient over the inner membrane that drives transmembrane transport and the ATP synthase. Cytochrome c oxidase is the component of the respiratory chain that catalyzes the reduction of oxygen to water. Electrons originating from reduced cytochrome c in the intermembrane space (IMS) are transferred via the dinuclear copper A center (CU(A)) of subunit 2 and heme A of subunit 1 to the active site in subunit 1, a binuclear center (BNC) formed by heme A3 and copper B (CU(B)). The BNC reduces molecular oxygen to 2 water molecules using 4 electrons from cytochrome c in the IMS and 4 protons from the mitochondrial matrix. This is Cytochrome c oxidase subunit 2 (COX2) from Brettanomyces naardenensis (Yeast).